We begin with the raw amino-acid sequence, 216 residues long: PEP-dependent dihydroxyacetone kinase 2, ADP-binding subunit DhaL (216 aa).

The 202-residue stretch at 9–210 (AFFGHVLQDM…SWMLMNVILE (202 aa)) folds into the DhaL domain. Asp-33, Asp-38, and Asp-40 together coordinate Mg(2+). ADP-binding positions include 41-44 (HGIN), 84-85 (AS), Gly-126, Met-135, Arg-182, and 195-197 (DPG).

In terms of assembly, homodimer. The dihydroxyacetone kinase complex is composed of a homodimer of DhaM, a homodimer of DhaK and the subunit DhaL. Requires Mg(2+) as cofactor.

Its subcellular location is the cytoplasm. It carries out the reaction dihydroxyacetone + phosphoenolpyruvate = dihydroxyacetone phosphate + pyruvate. The protein operates within polyol metabolism; glycerol degradation. Its function is as follows. ADP-binding subunit of the dihydroxyacetone kinase, which is responsible for the phosphoenolpyruvate (PEP)-dependent phosphorylation of dihydroxyacetone. DhaL-ADP is converted to DhaL-ATP via a phosphoryl group transfer from DhaM and transmits it to dihydroxyacetone binds to DhaK. The chain is PEP-dependent dihydroxyacetone kinase 2, ADP-binding subunit DhaL from Listeria innocua serovar 6a (strain ATCC BAA-680 / CLIP 11262).